A 278-amino-acid chain; its full sequence is 3-methyl-2-oxobutanoate hydroxymethyltransferase (278 aa).

Residues aspartate 43 and aspartate 82 each contribute to the Mg(2+) site. Residues 43–44 (DS), aspartate 82, and lysine 112 each bind 3-methyl-2-oxobutanoate. Residue glutamate 114 participates in Mg(2+) binding. The active-site Proton acceptor is the glutamate 181.

The protein belongs to the PanB family. As to quaternary structure, homodecamer; pentamer of dimers. Mg(2+) serves as cofactor.

It is found in the cytoplasm. The catalysed reaction is 3-methyl-2-oxobutanoate + (6R)-5,10-methylene-5,6,7,8-tetrahydrofolate + H2O = 2-dehydropantoate + (6S)-5,6,7,8-tetrahydrofolate. The protein operates within cofactor biosynthesis; (R)-pantothenate biosynthesis; (R)-pantoate from 3-methyl-2-oxobutanoate: step 1/2. Catalyzes the reversible reaction in which hydroxymethyl group from 5,10-methylenetetrahydrofolate is transferred onto alpha-ketoisovalerate to form ketopantoate. The chain is 3-methyl-2-oxobutanoate hydroxymethyltransferase from Bacillus cereus (strain G9842).